Consider the following 116-residue polypeptide: Large ribosomal subunit protein uL18 (116 aa).

It belongs to the universal ribosomal protein uL18 family. As to quaternary structure, part of the 50S ribosomal subunit; part of the 5S rRNA/L5/L18/L25 subcomplex. Contacts the 5S and 23S rRNAs.

This is one of the proteins that bind and probably mediate the attachment of the 5S RNA into the large ribosomal subunit, where it forms part of the central protuberance. This Shewanella denitrificans (strain OS217 / ATCC BAA-1090 / DSM 15013) protein is Large ribosomal subunit protein uL18.